We begin with the raw amino-acid sequence, 249 residues long: Adenylate kinase (249 aa).

G43 to T48 is a binding site for ATP. Positions A63–V92 are NMP. Residues T64, R69, G90–V92, G119–R122, and Q126 contribute to the AMP site. An LID region spans residues G160–D197. ATP is bound by residues R161 and S170–Y171. The disordered stretch occupies residues P177–D197. R194 and R205 together coordinate AMP. Q233 contributes to the ATP binding site.

It belongs to the adenylate kinase family. AK2 subfamily. As to quaternary structure, monomer.

The protein localises to the cytoplasm. The protein resides in the cytosol. It is found in the mitochondrion intermembrane space. The enzyme catalyses AMP + ATP = 2 ADP. Its function is as follows. Catalyzes the reversible transfer of the terminal phosphate group between ATP and AMP. Plays an important role in cellular energy homeostasis and in adenine nucleotide metabolism. Adenylate kinase activity is critical for regulation of the phosphate utilization and the AMP de novo biosynthesis pathways. This chain is Adenylate kinase, found in Candida albicans (strain SC5314 / ATCC MYA-2876) (Yeast).